A 327-amino-acid polypeptide reads, in one-letter code: Lipoyl synthase (327 aa).

[4Fe-4S] cluster-binding residues include Cys66, Cys71, Cys77, Cys92, Cys96, Cys99, and Ser306. In terms of domain architecture, Radical SAM core spans 78-295 (FSKGTATFMI…EKEAYELGFS (218 aa)).

This sequence belongs to the radical SAM superfamily. Lipoyl synthase family. [4Fe-4S] cluster is required as a cofactor.

It is found in the cytoplasm. The catalysed reaction is [[Fe-S] cluster scaffold protein carrying a second [4Fe-4S](2+) cluster] + N(6)-octanoyl-L-lysyl-[protein] + 2 oxidized [2Fe-2S]-[ferredoxin] + 2 S-adenosyl-L-methionine + 4 H(+) = [[Fe-S] cluster scaffold protein] + N(6)-[(R)-dihydrolipoyl]-L-lysyl-[protein] + 4 Fe(3+) + 2 hydrogen sulfide + 2 5'-deoxyadenosine + 2 L-methionine + 2 reduced [2Fe-2S]-[ferredoxin]. It participates in protein modification; protein lipoylation via endogenous pathway; protein N(6)-(lipoyl)lysine from octanoyl-[acyl-carrier-protein]: step 2/2. Its function is as follows. Catalyzes the radical-mediated insertion of two sulfur atoms into the C-6 and C-8 positions of the octanoyl moiety bound to the lipoyl domains of lipoate-dependent enzymes, thereby converting the octanoylated domains into lipoylated derivatives. This is Lipoyl synthase from Neisseria meningitidis serogroup B (strain ATCC BAA-335 / MC58).